The sequence spans 305 residues: Thymidylate synthase (305 aa).

DUMP-binding positions include arginine 26 and 160-161 (RR). The active-site Nucleophile is cysteine 180. DUMP-binding positions include 207–210 (RSCD), asparagine 218, and 248–250 (HLY). Aspartate 210 lines the (6R)-5,10-methylene-5,6,7,8-tetrahydrofolate pocket. Position 304 (alanine 304) interacts with (6R)-5,10-methylene-5,6,7,8-tetrahydrofolate.

Belongs to the thymidylate synthase family. Bacterial-type ThyA subfamily. As to quaternary structure, homodimer.

It localises to the cytoplasm. It carries out the reaction dUMP + (6R)-5,10-methylene-5,6,7,8-tetrahydrofolate = 7,8-dihydrofolate + dTMP. The protein operates within pyrimidine metabolism; dTTP biosynthesis. Catalyzes the reductive methylation of 2'-deoxyuridine-5'-monophosphate (dUMP) to 2'-deoxythymidine-5'-monophosphate (dTMP) while utilizing 5,10-methylenetetrahydrofolate (mTHF) as the methyl donor and reductant in the reaction, yielding dihydrofolate (DHF) as a by-product. This enzymatic reaction provides an intracellular de novo source of dTMP, an essential precursor for DNA biosynthesis. This Sinorhizobium fredii (strain NBRC 101917 / NGR234) protein is Thymidylate synthase.